Reading from the N-terminus, the 322-residue chain is Acetylglutamate kinase (322 aa).

Residues 89 to 90 (GG), Arg111, and Asn217 contribute to the substrate site.

It belongs to the acetylglutamate kinase family. ArgB subfamily.

The protein resides in the cytoplasm. It carries out the reaction N-acetyl-L-glutamate + ATP = N-acetyl-L-glutamyl 5-phosphate + ADP. It participates in amino-acid biosynthesis; L-arginine biosynthesis; N(2)-acetyl-L-ornithine from L-glutamate: step 2/4. In terms of biological role, catalyzes the ATP-dependent phosphorylation of N-acetyl-L-glutamate. The polypeptide is Acetylglutamate kinase (Ehrlichia ruminantium (strain Welgevonden)).